Reading from the N-terminus, the 336-residue chain is Probable RNA methyltransferase Anae109_4379 (336 aa).

E86 (proton acceptor) is an active-site residue. A Radical SAM core domain is found at 93-322 (FDTHHTVCLS…PIVRRYSGGQ (230 aa)). A disulfide bond links C100 and C328. Residues C107, C111, and C114 each contribute to the [4Fe-4S] cluster site. Residues 154-155 (GE), S186, and 209-211 (SLN) contribute to the S-adenosyl-L-methionine site. C328 serves as the catalytic S-methylcysteine intermediate.

This sequence belongs to the radical SAM superfamily. RlmN family. Requires [4Fe-4S] cluster as cofactor.

Its subcellular location is the cytoplasm. The protein is Probable RNA methyltransferase Anae109_4379 of Anaeromyxobacter sp. (strain Fw109-5).